A 372-amino-acid chain; its full sequence is Envelope phospholipase OPG057 (372 aa).

The short motif at 153–156 is the YPPL element; sequence YPPL. S-palmitoyl cysteine; by host attachment occurs at residues Cys185 and Cys186. The PLD phosphodiesterase domain maps to 307-334; it reads FTIQNNTKLLIVDDEYVHITSANFDGTH.

This sequence belongs to the orthopoxvirus OPG057 family. In terms of assembly, interacts with protein OPG190. Post-translationally, palmitoylated. Attachment of the palmitate moiety is essential for correct intracellular targeting and protein function.

It is found in the virion membrane. The protein localises to the host Golgi apparatus. Its subcellular location is the host trans-Golgi network. It localises to the host endoplasmic reticulum membrane. The enzyme catalyses a 1,2-diacyl-sn-glycero-3-phosphocholine + H2O = a 1,2-diacyl-sn-glycero-3-phosphate + choline + H(+). Functionally, major envelope protein that plays a role in the biogenesis of the viral double membrane and in egress of virus from the host cell. Produces the wrapped form of virus that is required for cell-to-cell spread. Acts as a lipase with broad specificity including phospholipase C, phospholipase A, and triacylglycerol lipase activities. The protein is Envelope phospholipase OPG057 (OPG057) of Homo sapiens (Human).